The sequence spans 105 residues: Extracellular guanyl-specific ribonuclease Fl1 (105 aa).

2 disulfide bridges follow: Cys-5/Cys-101 and Cys-23/Cys-82. Residue His-39 is part of the active site. Glu-57 (proton acceptor) is an active-site residue. His-90 serves as the catalytic Proton donor.

Belongs to the ribonuclease N1/T1 family.

It catalyses the reaction [RNA] containing guanosine + H2O = an [RNA fragment]-3'-guanosine-3'-phosphate + a 5'-hydroxy-ribonucleotide-3'-[RNA fragment].. This Gibberella baccata (Fusarium lateritium) protein is Extracellular guanyl-specific ribonuclease Fl1.